The primary structure comprises 179 residues: Large ribosomal subunit protein uL6 (179 aa).

Belongs to the universal ribosomal protein uL6 family. As to quaternary structure, part of the 50S ribosomal subunit.

In terms of biological role, this protein binds to the 23S rRNA, and is important in its secondary structure. It is located near the subunit interface in the base of the L7/L12 stalk, and near the tRNA binding site of the peptidyltransferase center. The protein is Large ribosomal subunit protein uL6 of Synechocystis sp. (strain ATCC 27184 / PCC 6803 / Kazusa).